A 1358-amino-acid chain; its full sequence is Phosphoinositide 3-kinase regulatory subunit 4 (1358 aa).

A lipid anchor (N-myristoyl glycine) is attached at glycine 2. The Protein kinase domain occupies 26-324; it reads FEYDKSLGST…AFPEIFYTFL (299 aa). ATP is bound by residues 32-40 and lysine 53; that span reads LGSTRFFKV. The active-site Proton acceptor is aspartate 148. HEAT repeat units follow at residues 373-411, 413-450, 458-495, 531-570, 572-610, 612-648, and 690-726; these read NGLV…RLGV, ILLD…LVKE, IYPE…TALR, QALH…FFGR, KAND…YVGW, SSSI…LGLL, and DVYC…PVSR. 4 positions are modified to phosphoserine: serine 808, serine 813, serine 853, and serine 865. The disordered stretch occupies residues 875–899; it reads LPKGSDQEVIQTGKPPRSESSAGIC. 6 WD repeats span residues 991–1030, 1040–1079, 1093–1134, 1139–1178, 1182–1223, and 1237–1278; these read EHKS…GKTT, RVGG…LPKS, KEDG…NAWT, LKSG…PISS, PSRA…RRFT, and PSPH…RSYV. The interval 1307–1326 is disordered; sequence KQKVGPSDDTPRRGPESLPV. Over residues 1315–1326 the composition is skewed to basic and acidic residues; it reads DTPRRGPESLPV. Threonine 1316 bears the Phosphothreonine mark. A WD 7 repeat occupies 1327-1358; the sequence is GHHDIITDVATFQTTQGFIVTASRDGIVKVWK.

It belongs to the protein kinase superfamily. Ser/Thr protein kinase family. As to quaternary structure, component of the PI3K (PI3KC3/PI3K-III/class III phosphatidylinositol 3-kinase) complex the core of which is composed of the catalytic subunit PIK3C3, the regulatory subunit PIK3R4 and BECN1 associating with additional regulatory/auxiliary subunits to form alternative complex forms. Alternative complex forms containing a fourth regulatory subunit in a mutually exclusive manner are PI3K complex I (PI3KC3-C1) containing ATG14, and PI3K complex II (PI3KC3-C2) containing UVRAG. PI3KC3-C1 displays a V-shaped architecture with PIK3R4 serving as a bridge between PIK3C3 and the ATG14:BECN1 subcomplex. Both, PI3KC3-C1 and PI3KC3-C2, can associate with further regulatory subunits, such as RUBCN, SH3GLB1/Bif-1, AMBRA1 and NRBF2. PI3KC3-C1 probably associates with PIK3CB. Interacts with RAB7A in the presence of PIK3C3/VPS34. Interacts with NRBF2. Interacts with ARMC3. The cofactor is Mn(2+). Myristoylated. In terms of processing, probably autophosphorylated.

Its subcellular location is the late endosome. The protein resides in the cytoplasmic vesicle. The protein localises to the autophagosome. It localises to the membrane. It carries out the reaction L-seryl-[protein] + ATP = O-phospho-L-seryl-[protein] + ADP + H(+). It catalyses the reaction L-threonyl-[protein] + ATP = O-phospho-L-threonyl-[protein] + ADP + H(+). Its function is as follows. Regulatory subunit of the PI3K complex that mediates formation of phosphatidylinositol 3-phosphate; different complex forms are believed to play a role in multiple membrane trafficking pathways: PI3KC3-C1 is involved in initiation of autophagosomes and PI3KC3-C2 in maturation of autophagosomes and endocytosis. Involved in regulation of degradative endocytic trafficking and cytokinesis, probably in the context of PI3KC3-C2. Regulatory subunit of the PI3K complex. May regulate membrane trafficking late in the endocytic pathway. The sequence is that of Phosphoinositide 3-kinase regulatory subunit 4 (PIK3R4) from Pongo abelii (Sumatran orangutan).